Consider the following 327-residue polypeptide: Glycerol-3-phosphate dehydrogenase [NAD(P)+] (327 aa).

NADPH contacts are provided by Trp-11, His-30, and Lys-103. Sn-glycerol 3-phosphate contacts are provided by Lys-103, Gly-131, and Ser-133. Residue Ala-135 coordinates NADPH. Sn-glycerol 3-phosphate contacts are provided by Lys-186, Asp-243, Ser-253, Arg-254, and Asn-255. The active-site Proton acceptor is Lys-186. Arg-254 contacts NADPH. Positions 281 and 283 each coordinate NADPH.

This sequence belongs to the NAD-dependent glycerol-3-phosphate dehydrogenase family.

It localises to the cytoplasm. The catalysed reaction is sn-glycerol 3-phosphate + NAD(+) = dihydroxyacetone phosphate + NADH + H(+). It catalyses the reaction sn-glycerol 3-phosphate + NADP(+) = dihydroxyacetone phosphate + NADPH + H(+). It participates in membrane lipid metabolism; glycerophospholipid metabolism. Its function is as follows. Catalyzes the reduction of the glycolytic intermediate dihydroxyacetone phosphate (DHAP) to sn-glycerol 3-phosphate (G3P), the key precursor for phospholipid synthesis. The sequence is that of Glycerol-3-phosphate dehydrogenase [NAD(P)+] from Wolbachia pipientis wMel.